Reading from the N-terminus, the 405-residue chain is 26S proteasome regulatory subunit 8 homolog (405 aa).

Thr2 carries the N-acetylthreonine modification. Residue 189–196 (GPPGTGKT) participates in ATP binding.

Belongs to the AAA ATPase family. May form a homodimer or a heterodimer with a related family member. Interacts with OLA1, TMA17, and UBR1. N-acetylated by NAT1.

It is found in the cytoplasm. Its subcellular location is the nucleus. Functionally, the 26S proteasome is involved in the ATP-dependent degradation of ubiquitinated proteins. The regulatory (or ATPase) complex confers ATP dependency and substrate specificity to the 26S complex. The polypeptide is 26S proteasome regulatory subunit 8 homolog (RPT6) (Saccharomyces cerevisiae (strain ATCC 204508 / S288c) (Baker's yeast)).